The chain runs to 338 residues: MNLNRFKRYPLTFGPSPITPLKRLSEHLGGKVELYAKREDCNSGLAFGGNKTRKLEYLIPEALEQGCDTLVSIGGIQSNQTRQVAAVAAHLGMKCVLVQENWVNYSDAVYDRVGNIEMSRIMGADVRLDAAGFDIGIRPSWEKAMNDVVERGGKPFPIPAGCSEHPYGGLGFVGFAEEVREQEKQLGFKFDYIVVCSVTGSTQAGMVVGFAADGRSKNVIGIDASAKPEKTKAQILRIARHTAELVELGREITEDDVVLDTPFAYPEYGLPNEGTLEAIRLCGSLEGVLTDPVYEGKSMHGMIEMVRRGEFPEGSKVLYAHLGGAPALNAYSFLFRNG.

K51 carries the N6-(pyridoxal phosphate)lysine modification. S78 (nucleophile) is an active-site residue.

It belongs to the ACC deaminase/D-cysteine desulfhydrase family. As to quaternary structure, homotrimer. The cofactor is pyridoxal 5'-phosphate.

The catalysed reaction is 1-aminocyclopropane-1-carboxylate + H2O = 2-oxobutanoate + NH4(+). Its function is as follows. Catalyzes a cyclopropane ring-opening reaction, the irreversible conversion of 1-aminocyclopropane-1-carboxylate (ACC) to ammonia and alpha-ketobutyrate. Allows growth on ACC as a nitrogen source. This is 1-aminocyclopropane-1-carboxylate deaminase from Pseudomonas fluorescens.